Consider the following 271-residue polypeptide: Formamidopyrimidine-DNA glycosylase (271 aa).

The active-site Schiff-base intermediate with DNA is the Pro-2. The active-site Proton donor is Glu-3. Residue Lys-58 is the Proton donor; for beta-elimination activity of the active site. DNA is bound by residues His-91, Arg-110, and Arg-152. The FPG-type zinc finger occupies 237–271; sequence RAYGRGGQPCTVCQTELKEIKLGQRTSVFCPSCQR. The Proton donor; for delta-elimination activity role is filled by Arg-261.

The protein belongs to the FPG family. In terms of assembly, monomer. Requires Zn(2+) as cofactor.

The enzyme catalyses Hydrolysis of DNA containing ring-opened 7-methylguanine residues, releasing 2,6-diamino-4-hydroxy-5-(N-methyl)formamidopyrimidine.. It carries out the reaction 2'-deoxyribonucleotide-(2'-deoxyribose 5'-phosphate)-2'-deoxyribonucleotide-DNA = a 3'-end 2'-deoxyribonucleotide-(2,3-dehydro-2,3-deoxyribose 5'-phosphate)-DNA + a 5'-end 5'-phospho-2'-deoxyribonucleoside-DNA + H(+). Functionally, involved in base excision repair of DNA damaged by oxidation or by mutagenic agents. Acts as a DNA glycosylase that recognizes and removes damaged bases. Has a preference for oxidized purines, such as 7,8-dihydro-8-oxoguanine (8-oxoG). Has AP (apurinic/apyrimidinic) lyase activity and introduces nicks in the DNA strand. Cleaves the DNA backbone by beta-delta elimination to generate a single-strand break at the site of the removed base with both 3'- and 5'-phosphates. This is Formamidopyrimidine-DNA glycosylase from Hahella chejuensis (strain KCTC 2396).